A 165-amino-acid chain; its full sequence is Adenosine 5'-monophosphoramidase HINT3 (165 aa).

The interval 1–23 is disordered; that stretch reads MAEKQAGLVGEPDPEGSSPGTSE. Residue A2 is modified to N-acetylalanine. The HIT domain occupies 32 to 143; it reads VFCRVAAGQE…PVKEFGFLSK (112 aa). AMP-binding positions include 59–60 and 128–130; these read DI and HLH. The short motif at 126-130 is the Histidine triad motif element; sequence HLHLH. The active-site Tele-AMP-histidine intermediate is the H128.

The protein belongs to the HINT family. Forms dimers to octamers and even larger oligomer. Interacts with CALM1.

It localises to the cytoplasm. The protein resides in the nucleus. The enzyme catalyses adenosine 5'-phosphoramidate + H2O = AMP + NH4(+). Functionally, exhibits adenosine 5'-monophosphoramidase activity, hydrolyzing purine nucleotide phosphoramidates with a single phosphate group such as adenosine 5'monophosphoramidate (AMP-NH2) to yield AMP and NH2. Hydrolyzes lysyl-AMP (AMP-N-epsilon-(N-alpha-acetyl lysine methyl ester)) generated by lysine tRNA ligase. This is Adenosine 5'-monophosphoramidase HINT3 (Hint3) from Mus musculus (Mouse).